The primary structure comprises 318 residues: Putative olfactory receptor 2W6 (318 aa).

At 1–31 the chain is on the extracellular side; sequence MGFYHVGQAAFELLTSSFILVGFSDRPHLEL. Residues 32 to 52 form a helical membrane-spanning segment; the sequence is IVFVVVLIFYLLTLLGNMTIV. Residues 53–63 are Cytoplasmic-facing; it reads LLSALDSRLHT. The helical transmembrane segment at 64-84 threads the bilayer; it reads PMYFFLANLSFLDMCFTTGSI. Over 85–103 the chain is Extracellular; it reads PQMLYNLWGPDKTISYVGC. Cys-103 and Cys-185 form a disulfide bridge. Residues 104 to 124 form a helical membrane-spanning segment; the sequence is AIQLYFVLALGGVECVLLAVM. Over 125 to 145 the chain is Cytoplasmic; sequence AYDRYAAVCKPLHYTIIMHPR. Residues 146–166 form a helical membrane-spanning segment; sequence LCGQLASVAWLSGFGNSLIMA. Over 167-202 the chain is Extracellular; it reads PQTLMLPRCGHRRVDHFLCEMPALIGMACVDTMMLE. The chain crosses the membrane as a helical span at residues 203–223; the sequence is ALAFALAIFIILAPLILILIS. Residues 224–245 are Cytoplasmic-facing; the sequence is YGYVGGTVLRIKSAAGRKKAFN. Residues 246–266 form a helical membrane-spanning segment; that stretch reads TCSSHLIVVSLFYGTIIYMYL. The Extracellular portion of the chain corresponds to 267–277; the sequence is QPANTYSQDQG. Residues 278–298 form a helical membrane-spanning segment; the sequence is KFLTLFYTIVTPSVNPLIYTL. At 299 to 318 the chain is on the cytoplasmic side; the sequence is RNKDVKEAMKKVLGKGSAEI.

This sequence belongs to the G-protein coupled receptor 1 family.

It localises to the cell membrane. Functionally, odorant receptor. The protein is Putative olfactory receptor 2W6 (OR2W6P) of Homo sapiens (Human).